Reading from the N-terminus, the 481-residue chain is MTVRVRIAPSPTGNLHIGTARTAVFNWLFARHHGGTFILRIEDTDLERSRPEYTENIMTGLRWLGLNWDEGPFFQSQRLDLYQKAVKQLLDQGLAYRCYTTSEELEALREAQKAKGEAPRYDNRHRHLTPEQEAEFKAQGRSFVIRFKIDDEREIVWNDLVRGKMSWRGSDLGGDMVIARASENDTGQPLYNFVVVIDDIDMQISHVIRGEDHIANTAKQILLYEAFGAKIPEFAHTPLILNMEGRKLSKRDGVTSISDFQQMGFTSEGLVNYMTLLGWSPPDSTQEIFTLEAAAKEFTFERVNKAGAKFDWAKLDWLNSQYIHNTPVDQLTDLLIPYWEAAGYSFAGGRDRPWLEQLVGLLSASLTRLTDAVDMSKLFFSETVELSEEGSKQLQQEGSKAVLEAIIAALEAQTQLTENAAQDIIKQVVKAQNVKKGLVMRSLRVALTGDVHGPDLIQSWLLLNQIGLDKPRLSQAIAASL.

The 'HIGH' region motif lies at 9–19 (PSPTGNLHIGT). The 'KMSKS' region motif lies at 247–251 (KLSKR). Lysine 250 lines the ATP pocket.

The protein belongs to the class-I aminoacyl-tRNA synthetase family. Glutamate--tRNA ligase type 1 subfamily. Monomer.

It is found in the cytoplasm. The enzyme catalyses tRNA(Glu) + L-glutamate + ATP = L-glutamyl-tRNA(Glu) + AMP + diphosphate. In terms of biological role, catalyzes the attachment of glutamate to tRNA(Glu) in a two-step reaction: glutamate is first activated by ATP to form Glu-AMP and then transferred to the acceptor end of tRNA(Glu). This chain is Glutamate--tRNA ligase, found in Trichormus variabilis (strain ATCC 29413 / PCC 7937) (Anabaena variabilis).